The primary structure comprises 818 residues: uncharacterized protein (818 aa).

Low complexity-rich tracts occupy residues 1-33 (MYNN…NYIS), 44-68 (NNFL…PQQQ), and 97-150 (NNSN…TKSN). 5 disordered regions span residues 1 to 68 (MYNN…PQQQ), 92 to 150 (LNTG…TKSN), 164 to 220 (KLDN…KYHE), 284 to 306 (NMNG…NNSD), and 415 to 445 (NINK…NNNN). Acidic residues-rich tracts occupy residues 172-190 (SEEE…EEKE) and 205-214 (DNNSQDEDKE). Over residues 284-302 (NMNGSSDSSDSSNSSGHSR) the composition is skewed to low complexity. Residues 534 to 554 (IIAIIVIVWPLIANLTYKFIV) form a helical membrane-spanning segment. Positions 779 to 808 (ANNFMSDSNRSPSSSSSSSSSTSDSENGML) are disordered. A compositionally biased stretch (low complexity) spans 784-803 (SDSNRSPSSSSSSSSSTSDS).

Its subcellular location is the membrane. This is an uncharacterized protein from Dictyostelium discoideum (Social amoeba).